The primary structure comprises 475 residues: ATP synthase subunit beta, chloroplastic (475 aa).

ATP is bound at residue 155-162 (GGAGVGKT).

This sequence belongs to the ATPase alpha/beta chains family. F-type ATPases have 2 components, CF(1) - the catalytic core - and CF(0) - the membrane proton channel. CF(1) has five subunits: alpha(3), beta(3), gamma(1), delta(1), epsilon(1). CF(0) has four main subunits: a(1), b(1), b'(1) and c(9-12).

It is found in the plastid. It localises to the chloroplast thylakoid membrane. The catalysed reaction is ATP + H2O + 4 H(+)(in) = ADP + phosphate + 5 H(+)(out). Its function is as follows. Produces ATP from ADP in the presence of a proton gradient across the membrane. The catalytic sites are hosted primarily by the beta subunits. In Porphyra purpurea (Red seaweed), this protein is ATP synthase subunit beta, chloroplastic.